Consider the following 371-residue polypeptide: tRNA-specific 2-thiouridylase MnmA (371 aa).

Residues 16–23 (GMSGGVDS) and M42 contribute to the ATP site. The segment at 102–104 (NPD) is interaction with target base in tRNA. C107 (nucleophile) is an active-site residue. A disulfide bridge connects residues C107 and C204. G132 contributes to the ATP binding site. The interaction with tRNA stretch occupies residues 154–156 (KDQ). C204 serves as the catalytic Cysteine persulfide intermediate. The segment at 316–317 (RY) is interaction with tRNA.

This sequence belongs to the MnmA/TRMU family.

Its subcellular location is the cytoplasm. It catalyses the reaction S-sulfanyl-L-cysteinyl-[protein] + uridine(34) in tRNA + AH2 + ATP = 2-thiouridine(34) in tRNA + L-cysteinyl-[protein] + A + AMP + diphosphate + H(+). Functionally, catalyzes the 2-thiolation of uridine at the wobble position (U34) of tRNA, leading to the formation of s(2)U34. This Shewanella piezotolerans (strain WP3 / JCM 13877) protein is tRNA-specific 2-thiouridylase MnmA.